We begin with the raw amino-acid sequence, 412 residues long: L-threonine:uridine-5'-aldehyde transaldolase (412 aa).

The residue at position 229 (K229) is an N6-(pyridoxal phosphate)lysine.

Belongs to the SHMT family. It depends on pyridoxal 5'-phosphate as a cofactor.

The catalysed reaction is uridine-5'-aldehyde + L-threonine = (5'S,6'S)-C-glycyluridine + acetaldehyde. It participates in antibiotic biosynthesis. Its function is as follows. Transaldolase involved in the biosynthesis of the capuramycin-type nucleoside antibiotic A-503083. Catalyzes the condensation of L-threonine and uridine-5'-aldehyde to form 5'-C-glycyluridine (GlyU). Forms (5'S,6'S)-GlyU. This chain is L-threonine:uridine-5'-aldehyde transaldolase, found in Streptomyces sp.